A 288-amino-acid polypeptide reads, in one-letter code: Quinate/shikimate dehydrogenase (288 aa).

Substrate is bound by residues lysine 71 and aspartate 107. Residues 132–135 (AGGA), 155–158 (NRKD), lysine 205, 232–235 (CVYN), and glycine 255 contribute to the NAD(+) site.

It belongs to the shikimate dehydrogenase family. Homodimer.

It catalyses the reaction L-quinate + NAD(+) = 3-dehydroquinate + NADH + H(+). The catalysed reaction is L-quinate + NADP(+) = 3-dehydroquinate + NADPH + H(+). It carries out the reaction shikimate + NADP(+) = 3-dehydroshikimate + NADPH + H(+). The enzyme catalyses shikimate + NAD(+) = 3-dehydroshikimate + NADH + H(+). Its pathway is metabolic intermediate biosynthesis; chorismate biosynthesis; chorismate from D-erythrose 4-phosphate and phosphoenolpyruvate: step 4/7. Functionally, the actual biological function of YdiB remains unclear, nor is it known whether 3-dehydroshikimate or quinate represents the natural substrate. Catalyzes the reversible NAD-dependent reduction of both 3-dehydroshikimate (DHSA) and 3-dehydroquinate to yield shikimate (SA) and quinate, respectively. It can use both NAD or NADP for catalysis, however it has higher catalytic efficiency with NAD. This chain is Quinate/shikimate dehydrogenase, found in Salmonella agona (strain SL483).